A 222-amino-acid chain; its full sequence is 2-hydroxy-3-keto-5-methylthiopentenyl-1-phosphate phosphatase (222 aa).

This sequence belongs to the HAD-like hydrolase superfamily. MtnX family.

The catalysed reaction is 2-hydroxy-5-methylsulfanyl-3-oxopent-1-enyl phosphate + H2O = 1,2-dihydroxy-5-(methylsulfanyl)pent-1-en-3-one + phosphate. Its pathway is amino-acid biosynthesis; L-methionine biosynthesis via salvage pathway; L-methionine from S-methyl-5-thio-alpha-D-ribose 1-phosphate: step 4/6. In terms of biological role, dephosphorylates 2-hydroxy-3-keto-5-methylthiopentenyl-1-phosphate (HK-MTPenyl-1-P) yielding 1,2-dihydroxy-3-keto-5-methylthiopentene (DHK-MTPene). This is 2-hydroxy-3-keto-5-methylthiopentenyl-1-phosphate phosphatase from Brevibacillus brevis (strain 47 / JCM 6285 / NBRC 100599).